Reading from the N-terminus, the 44-residue chain is Photosystem II reaction center protein J (44 aa).

The helical transmembrane segment at 12 to 32 threads the bilayer; it reads IPLWIVGFVVGSLALGLLGIL.

It belongs to the PsbJ family. As to quaternary structure, PSII is composed of 1 copy each of membrane proteins PsbA, PsbB, PsbC, PsbD, PsbE, PsbF, PsbH, PsbI, PsbJ, PsbK, PsbL, PsbM, PsbT, PsbY, PsbZ, Psb30/Ycf12, at least 3 peripheral proteins of the oxygen-evolving complex and a large number of cofactors. It forms dimeric complexes.

It is found in the plastid. Its subcellular location is the chloroplast thylakoid membrane. One of the components of the core complex of photosystem II (PSII). PSII is a light-driven water:plastoquinone oxidoreductase that uses light energy to abstract electrons from H(2)O, generating O(2) and a proton gradient subsequently used for ATP formation. It consists of a core antenna complex that captures photons, and an electron transfer chain that converts photonic excitation into a charge separation. This chain is Photosystem II reaction center protein J, found in Bigelowiella natans (Pedinomonas minutissima).